The following is a 266-amino-acid chain: Small ribosomal subunit protein uS2 (266 aa).

The segment at 247–266 is disordered; sequence EGENNYSNNRSWNKPERTNN. Positions 249–258 are enriched in polar residues; it reads ENNYSNNRSW.

It belongs to the universal ribosomal protein uS2 family.

The polypeptide is Small ribosomal subunit protein uS2 (Mesoplasma florum (strain ATCC 33453 / NBRC 100688 / NCTC 11704 / L1) (Acholeplasma florum)).